The following is a 570-amino-acid chain: MAKYVIGSAWPYVQTVPHLGNMIGSVLSADVYARYLRLKGHEVVFVSGSDVHGTPVEVEAIQLGVDPAEYSMKMHAIVAELFKKWNISFDLYTHTHSETHIKFVQDFYLKIYENGYIFTKEDEVPYCPRDKIYLPDRFIIGKCPYCGYERARGDQCENCGRLLDPKQLIEPKCAVCGSKPEWRITKHWYLDLRRLEDRIRKYVEENPHLPPNAKEMSLAMLKEGLRPRAVTRDNKWGIPAPFPGAEGKTIYVWFEAVLGYISAVVEYFKKIGREEEWKRFWLDPETKVVFFVGKDNVPFHVIILPALLLANGGGYVMPTTTASTEYLLYEGDKFSKSRRWGVWIDEALQLLPADYWRFVLIYIRPENRDTNFSWSTALEIINKVLNDDVGNYANRVLSFIKNRMGGAVPPRGKPSRDDEEFIEKVKRLFEKAEAHYEAIELKDAVHTVVEIAREGNKYLNARAPWDLVKKDVDAANAVMYHAYWSLKFLAVGLAPAIPESAEQLWKMMGLDAPLTWEEAKRPPAVGKALGEVRPLFRKITEEEVKALLAKLEELRNQKYSRKYPWEQVVI.

A 'HIGH' region motif is present at residues 11–21; the sequence is PYVQTVPHLGN. Positions 143, 146, 156, and 159 each coordinate Zn(2+). Positions 333-337 match the 'KMSKS' region motif; that stretch reads KFSKS. Lysine 336 contacts ATP.

The protein belongs to the class-I aminoacyl-tRNA synthetase family. MetG type 1 subfamily. It depends on Zn(2+) as a cofactor.

The protein resides in the cytoplasm. It catalyses the reaction tRNA(Met) + L-methionine + ATP = L-methionyl-tRNA(Met) + AMP + diphosphate. Is required not only for elongation of protein synthesis but also for the initiation of all mRNA translation through initiator tRNA(fMet) aminoacylation. This Pyrobaculum aerophilum (strain ATCC 51768 / DSM 7523 / JCM 9630 / CIP 104966 / NBRC 100827 / IM2) protein is Methionine--tRNA ligase.